A 436-amino-acid polypeptide reads, in one-letter code: 3-ketoacyl-CoA thiolase (436 aa).

C99 serves as the catalytic Acyl-thioester intermediate. Residues H392 and C422 each act as proton acceptor in the active site.

It belongs to the thiolase-like superfamily. Thiolase family. In terms of assembly, heterotetramer of two alpha chains (FadJ) and two beta chains (FadI).

The protein localises to the cytoplasm. It carries out the reaction an acyl-CoA + acetyl-CoA = a 3-oxoacyl-CoA + CoA. The protein operates within lipid metabolism; fatty acid beta-oxidation. Its function is as follows. Catalyzes the final step of fatty acid oxidation in which acetyl-CoA is released and the CoA ester of a fatty acid two carbons shorter is formed. This chain is 3-ketoacyl-CoA thiolase, found in Escherichia coli O81 (strain ED1a).